The chain runs to 21 residues: Bradykinin-potentiating peptide K12 (21 aa).

The interval 1-21 (LRDYANRVINGGPVEAAGPPA) is disordered.

As to expression, expressed by the venom gland.

Its subcellular location is the secreted. In terms of biological role, inhibits angiotensin-converting enzyme (ACE), but does not serve as substrate for the enzyme. Potentiate bradykinin (BK) on the isolated guinea pig ileum as well as the isolated rat uterus for contraction. Also potentiates in vivo the depressor effect of BK on arterial blood pressure in the normotensive anesthetized rat. Intracerebroventricular injection into mice does not show toxic activity. In Buthus occitanus (Common European scorpion), this protein is Bradykinin-potentiating peptide K12.